The sequence spans 58 residues: uncharacterized protein (58 aa).

This sequence belongs to the ycf18/nblA family.

It is found in the plastid. It localises to the chloroplast. This is an uncharacterized protein from Porphyra purpurea (Red seaweed).